We begin with the raw amino-acid sequence, 268 residues long: Phosphatidylglycerol--prolipoprotein diacylglyceryl transferase (268 aa).

A run of 7 helical transmembrane segments spans residues 21–41 (WYGIIIVSAIALSIWLGGRFA), 54–74 (FAIILVPAGILGARLYEVFVL), 93–113 (GLAIHGAVLGGAIAAAIYLPM), 122–142 (ADVVGLVLPLAQAIGRWGNFF), 173–193 (VMHPTFLYESVWNLLTFGILL), 203–223 (GVVFSLYLVLYNAGRFLIESI), and 236–256 (VAQLVAAVLAILGLVLLAWFL). An a 1,2-diacyl-sn-glycero-3-phospho-(1'-sn-glycerol)-binding site is contributed by R137.

Belongs to the Lgt family.

It localises to the cell membrane. It carries out the reaction L-cysteinyl-[prolipoprotein] + a 1,2-diacyl-sn-glycero-3-phospho-(1'-sn-glycerol) = an S-1,2-diacyl-sn-glyceryl-L-cysteinyl-[prolipoprotein] + sn-glycerol 1-phosphate + H(+). It functions in the pathway protein modification; lipoprotein biosynthesis (diacylglyceryl transfer). Catalyzes the transfer of the diacylglyceryl group from phosphatidylglycerol to the sulfhydryl group of the N-terminal cysteine of a prolipoprotein, the first step in the formation of mature lipoproteins. In Symbiobacterium thermophilum (strain DSM 24528 / JCM 14929 / IAM 14863 / T), this protein is Phosphatidylglycerol--prolipoprotein diacylglyceryl transferase.